Here is a 535-residue protein sequence, read N- to C-terminus: Transmembrane protein 151 homolog (535 aa).

Transmembrane regions (helical) follow at residues 27–47, 73–93, and 254–274; these read GYGK…YATY, YNFV…MECW, and PWFL…SWPL. Residues 498-535 are disordered; sequence ASISHSSSKDLKSLTLKNNNGAANNNNNNNNENPEEQP. Over residues 510-529 the composition is skewed to low complexity; sequence SLTLKNNNGAANNNNNNNNE.

The protein belongs to the TMEM151 family.

The protein localises to the membrane. This is Transmembrane protein 151 homolog from Caenorhabditis briggsae.